The chain runs to 323 residues: Fructose-1,6-bisphosphatase class 1 (323 aa).

Mg(2+)-binding residues include Glu88, Asp107, Leu109, and Asp110. Substrate is bound by residues Asp110–Ser113 and Asn200. Glu272 contacts Mg(2+).

Belongs to the FBPase class 1 family. As to quaternary structure, homotetramer. Mg(2+) is required as a cofactor.

The protein localises to the cytoplasm. The enzyme catalyses beta-D-fructose 1,6-bisphosphate + H2O = beta-D-fructose 6-phosphate + phosphate. The protein operates within carbohydrate biosynthesis; gluconeogenesis. This is Fructose-1,6-bisphosphatase class 1 from Acinetobacter baumannii (strain ATCC 17978 / DSM 105126 / CIP 53.77 / LMG 1025 / NCDC KC755 / 5377).